Consider the following 193-residue polypeptide: NADPH:quinone oxidoreductase MdaB (193 aa).

FAD contacts are provided by residues 16-23, 69-72, Tyr-108, and 124-127; these read SNGQLNDT, GWWM, and TWNA.

Belongs to the oxidoreductase MdaB family. In terms of assembly, homodimer. FAD serves as cofactor.

The protein resides in the cytoplasm. The catalysed reaction is a quinone + NADPH + H(+) = a quinol + NADP(+). In terms of biological role, NADPH-specific quinone reductase. The protein is NADPH:quinone oxidoreductase MdaB of Escherichia coli O157:H7.